We begin with the raw amino-acid sequence, 907 residues long: Cytochrome b561, DM13 and DOMON domain-containing protein At5g54830 (907 aa).

The N-terminal stretch at 1–24 is a signal peptide; it reads MCDQRPNLLGSLVLLGFFIFFVNG. Residues 31–139 enclose the DM13 domain; sequence SSLIGHESEF…ASDFGHVLLS (109 aa). The tract at residues 144-172 is disordered; sequence SDTSKAESPPSESNDVAPGKSNNSEPFKA. The span at 153 to 168 shows a compositional bias: polar residues; the sequence is PSESNDVAPGKSNNSE. 2 consecutive DOMON domains span residues 184-329 and 524-645; these read DKYR…WALG and QQVK…WAMG. In terms of domain architecture, Cytochrome b561 spans 653–850; it reads LTERNMHSVT…CVVTVAYLEY (198 aa). Residues 685-705 form a helical membrane-spanning segment; sequence VLGVHGFMMFLAWGILLPGGI. Heme b contacts are provided by H689 and H723. 4 helical membrane-spanning segments follow: residues 730–750, 754–774, 795–815, and 829–849; these read GLAIVFLGLLFAVAELNGFSF, HVKFGFTAIVLACAQPVNAWL, SHSIVGQSAVVVGVVALFTGM, and GLNLALGLWVFLCVVTVAYLE. Residues H754 and H796 each contribute to the heme b site. Positions 884–897 are enriched in basic and acidic residues; it reads GGFRDKDDEDRNGG. The disordered stretch occupies residues 884–907; the sequence is GGFRDKDDEDRNGGRMEIQLEPLK.

It depends on heme b as a cofactor.

The protein resides in the membrane. Functionally, may act as a catecholamine-responsive trans-membrane electron transporter. In Arabidopsis thaliana (Mouse-ear cress), this protein is Cytochrome b561, DM13 and DOMON domain-containing protein At5g54830.